Reading from the N-terminus, the 262-residue chain is Small ribosomal subunit protein uS2 (262 aa).

This sequence belongs to the universal ribosomal protein uS2 family.

The protein is Small ribosomal subunit protein uS2 of Rhodospirillum rubrum (strain ATCC 11170 / ATH 1.1.1 / DSM 467 / LMG 4362 / NCIMB 8255 / S1).